A 384-amino-acid polypeptide reads, in one-letter code: Neuropeptide Y receptor type 1 (384 aa).

Residues 1–44 (MNSTLFSQVENHSVHSNFSEKNAQLLAFENDDCHLPLAMIFTLA) lie on the Extracellular side of the membrane. 3 N-linked (GlcNAc...) asparagine glycosylation sites follow: Asn-2, Asn-11, and Asn-17. Residues 45 to 65 (LAYGAVIILGVSGNLALIIII) traverse the membrane as a helical segment. At 66–76 (LKQKEMRNVTN) the chain is on the cytoplasmic side. Residues 77–97 (ILIVNLSFSDLLVAIMCLPFT) form a helical membrane-spanning segment. The Extracellular segment spans residues 98 to 116 (FVYTLMDHWVFGEAMCKLN). A disulfide bond links Cys-113 and Cys-198. The chain crosses the membrane as a helical span at residues 117 to 137 (PFVQCVSITVSIFSLVLIAVE). The Cytoplasmic portion of the chain corresponds to 138–154 (RHQLIINPRGWRPNNRH). Residues 155–175 (AYVGIAVIWVLAVASSLPFLI) form a helical membrane-spanning segment. Residues 176–211 (YQVMTDEPFQNVTLDAYKDKYVCFDQFPSDSHRLSY) are Extracellular-facing. A helical membrane pass occupies residues 212-232 (TTLLLVLQYFGPLCFIFICYF). The Cytoplasmic portion of the chain corresponds to 233 to 260 (KIYIRLKRRNNMMDKMRDNKYRSSETKR). A helical transmembrane segment spans residues 261-281 (INIMLLSIVVAFAVCWLPLTI). Residues 282 to 299 (FNTVFDWNHQIIATCNHN) are Extracellular-facing. A helical transmembrane segment spans residues 300 to 320 (LLFLLCHLTAMISTCVNPIFY). Topologically, residues 321 to 384 (GFLNKNFQRD…INNNDDNEKI (64 aa)) are cytoplasmic. A lipid anchor (S-palmitoyl cysteine) is attached at Cys-338. Ser-368 is subject to Phosphoserine.

This sequence belongs to the G-protein coupled receptor 1 family.

It is found in the cell membrane. Receptor for neuropeptide Y and peptide YY. The rank order of affinity of this receptor for pancreatic polypeptides is NPY &gt; [Pro-34] PYY, PYY and [Leu-31, Pro-34] NPY &gt; NPY (2-36) &gt; [Ile-31, Gln-34] PP and PYY (3-36) &gt; PP &gt; NPY free acid. The sequence is that of Neuropeptide Y receptor type 1 (NPY1R) from Homo sapiens (Human).